Here is a 396-residue protein sequence, read N- to C-terminus: Pre-mRNA-splicing regulator WTAP (396 aa).

The residue at position 1 (Met1) is an N-acetylmethionine. Ser14 carries the phosphoserine modification. 3 stretches are compositionally biased toward low complexity: residues 240 to 257, 278 to 291, and 304 to 316; these read QQQQ…TTAS, SNGS…SGSG, and PSSP…SSNS. The segment at 240–396 is disordered; that stretch reads QQQQSQASAP…SSVNVQGSVL (157 aa). 3 positions are modified to phosphoserine: Ser305, Ser306, and Ser341. Over residues 340–356 the composition is skewed to polar residues; sequence DSPTGSENSLTHQSNDT. Thr350 carries the phosphothreonine modification. Residues 357–368 are compositionally biased toward basic and acidic residues; sequence DSSHDPQEEKAV. Residues 380-396 are compositionally biased toward polar residues; it reads HVQNGLDSSVNVQGSVL. Ser388 bears the Phosphoserine mark.

It belongs to the fl(2)d family. In terms of assembly, component of the WMM complex, a N6-methyltransferase complex composed of a catalytic subcomplex, named MAC, and of an associated subcomplex, named MACOM. The MAC subcomplex is composed of METTL3 and METTL14. The MACOM subcomplex is composed of WTAP, ZC3H13, CBLL1/HAKAI, VIRMA, and, in some cases of RBM15 (RBM15 or RBM15B). Interacts with WT1. Also a component of a MACOM-like complex, named WTAP complex, composed of WTAP, ZC3H13, CBLL1, VIRMA, RBM15, BCLAF1 and THRAP3. As to expression, ubiquitously expressed.

The protein localises to the nucleus speckle. Its subcellular location is the nucleus. It localises to the nucleoplasm. The protein resides in the cytoplasm. Functionally, associated component of the WMM complex, a complex that mediates N6-methyladenosine (m6A) methylation of RNAs, a modification that plays a role in the efficiency of mRNA splicing and RNA processing. Required for accumulation of METTL3 and METTL14 to nuclear speckle. Acts as a mRNA splicing regulator. Regulates G2/M cell-cycle transition by binding to the 3' UTR of CCNA2, which enhances its stability. Impairs WT1 DNA-binding ability and inhibits expression of WT1 target genes. The chain is Pre-mRNA-splicing regulator WTAP from Homo sapiens (Human).